A 250-amino-acid chain; its full sequence is 5-oxoprolinase subunit A (250 aa).

Belongs to the LamB/PxpA family. As to quaternary structure, forms a complex composed of PxpA, PxpB and PxpC.

It catalyses the reaction 5-oxo-L-proline + ATP + 2 H2O = L-glutamate + ADP + phosphate + H(+). In terms of biological role, catalyzes the cleavage of 5-oxoproline to form L-glutamate coupled to the hydrolysis of ATP to ADP and inorganic phosphate. This is 5-oxoprolinase subunit A from Chromohalobacter salexigens (strain ATCC BAA-138 / DSM 3043 / CIP 106854 / NCIMB 13768 / 1H11).